The sequence spans 245 residues: 1-(5-phosphoribosyl)-5-[(5-phosphoribosylamino)methylideneamino] imidazole-4-carboxamide isomerase (245 aa).

Residue Asp-7 is the Proton acceptor of the active site. The active-site Proton donor is Asp-129.

The protein belongs to the HisA/HisF family.

The protein localises to the cytoplasm. It catalyses the reaction 1-(5-phospho-beta-D-ribosyl)-5-[(5-phospho-beta-D-ribosylamino)methylideneamino]imidazole-4-carboxamide = 5-[(5-phospho-1-deoxy-D-ribulos-1-ylimino)methylamino]-1-(5-phospho-beta-D-ribosyl)imidazole-4-carboxamide. It functions in the pathway amino-acid biosynthesis; L-histidine biosynthesis; L-histidine from 5-phospho-alpha-D-ribose 1-diphosphate: step 4/9. In Serratia proteamaculans (strain 568), this protein is 1-(5-phosphoribosyl)-5-[(5-phosphoribosylamino)methylideneamino] imidazole-4-carboxamide isomerase.